A 241-amino-acid chain; its full sequence is Aspartate/glutamate leucyltransferase (241 aa).

It belongs to the R-transferase family. Bpt subfamily.

It localises to the cytoplasm. The catalysed reaction is N-terminal L-glutamyl-[protein] + L-leucyl-tRNA(Leu) = N-terminal L-leucyl-L-glutamyl-[protein] + tRNA(Leu) + H(+). The enzyme catalyses N-terminal L-aspartyl-[protein] + L-leucyl-tRNA(Leu) = N-terminal L-leucyl-L-aspartyl-[protein] + tRNA(Leu) + H(+). In terms of biological role, functions in the N-end rule pathway of protein degradation where it conjugates Leu from its aminoacyl-tRNA to the N-termini of proteins containing an N-terminal aspartate or glutamate. In Helicobacter hepaticus (strain ATCC 51449 / 3B1), this protein is Aspartate/glutamate leucyltransferase.